Here is a 477-residue protein sequence, read N- to C-terminus: ATP synthase subunit beta, chloroplastic (477 aa).

156 to 163 is a binding site for ATP; sequence GGAGVGKT.

This sequence belongs to the ATPase alpha/beta chains family. As to quaternary structure, F-type ATPases have 2 components, CF(1) - the catalytic core - and CF(0) - the membrane proton channel. CF(1) has five subunits: alpha(3), beta(3), gamma(1), delta(1), epsilon(1). CF(0) has four main subunits: a(1), b(1), b'(1) and c(9-12).

It is found in the plastid. The protein localises to the chloroplast thylakoid membrane. It carries out the reaction ATP + H2O + 4 H(+)(in) = ADP + phosphate + 5 H(+)(out). Produces ATP from ADP in the presence of a proton gradient across the membrane. The catalytic sites are hosted primarily by the beta subunits. In Bigelowiella natans (Pedinomonas minutissima), this protein is ATP synthase subunit beta, chloroplastic.